The following is a 491-amino-acid chain: Stage IV sporulation protein A (491 aa).

The short motif at 23 to 30 (GPVRTGKS) is the Walker A motif; involved in ATP-binding element. 23–30 (GPVRTGKS) serves as a coordination point for ATP. Positions 334 to 362 (QLLSLITRLSKVKNEYDKIESALIDAKIK) form a coiled coil.

In terms of assembly, interacts (via Walker A motif) with SipL (via C-terminus LysM domain).

It localises to the cytoplasm. The catalysed reaction is ATP + H2O = ADP + phosphate + H(+). In terms of biological role, ATPase. Has a role at an early stage in the morphogenesis of the spore coat and is required for proper coat localization to the forespore. The chain is Stage IV sporulation protein A from Clostridioides difficile (strain 630) (Peptoclostridium difficile).